Consider the following 248-residue polypeptide: Ureidoacrylate amidohydrolase RutB (248 aa).

Residue D41 is the Proton acceptor of the active site. K150 is an active-site residue. C183 functions as the Nucleophile in the catalytic mechanism.

Belongs to the isochorismatase family. RutB subfamily.

It catalyses the reaction (Z)-3-ureidoacrylate + H2O + H(+) = (Z)-3-aminoacrylate + NH4(+) + CO2. The catalysed reaction is (Z)-3-ureidoacrylate + H2O = (Z)-3-aminoacrylate + carbamate + H(+). The enzyme catalyses (Z)-2-methylureidoacrylate + H2O + H(+) = (Z)-2-methylaminoacrylate + NH4(+) + CO2. Hydrolyzes ureidoacrylate to form aminoacrylate and carbamate. The carbamate hydrolyzes spontaneously, thereby releasing one of the nitrogen atoms of the pyrimidine ring as ammonia and one of its carbon atoms as CO2. This chain is Ureidoacrylate amidohydrolase RutB, found in Stutzerimonas stutzeri (strain A1501) (Pseudomonas stutzeri).